The chain runs to 297 residues: Vacuolar protein sorting-associated protein 26 (297 aa).

The protein belongs to the VPS26 family. Component of the retromer complex, composed of VPS26, VPS29 and VPS35. As part of the retromer complex, interacts with the sorting receptor SORTLR/sortilin. Interacts with GTPase RAB7.

Plays a role in vesicular protein sorting. Component of the membrane-associated retromer complex which is essential in endosome-to-Golgi retrograde transport. This Plasmodium falciparum (isolate 3D7) protein is Vacuolar protein sorting-associated protein 26.